A 476-amino-acid polypeptide reads, in one-letter code: ATP sulfurylase 2 (476 aa).

A chloroplast-targeting transit peptide spans 1–56; sequence MSLMIRSSYVSHITLFQPRNSKPSSFTNQISFLSSSNNNPFLNLVYKRNLTMQSVS.

This sequence belongs to the sulfate adenylyltransferase family. As to quaternary structure, homotetramer. As to expression, mostly expressed in leaves or cotyledons.

It is found in the plastid. It localises to the chloroplast. Its subcellular location is the cytoplasm. The catalysed reaction is sulfate + ATP + H(+) = adenosine 5'-phosphosulfate + diphosphate. Its pathway is sulfur metabolism; hydrogen sulfide biosynthesis; sulfite from sulfate: step 1/3. The sequence is that of ATP sulfurylase 2 (APS2) from Arabidopsis thaliana (Mouse-ear cress).